Here is a 384-residue protein sequence, read N- to C-terminus: Beta-glucuronosyltransferase GlcAT14C (384 aa).

Over 1–11 (MKRSHISSPRS) the chain is Cytoplasmic. A signal-anchor for type II membrane protein transmembrane segment spans residues 12-34 (YSRPAISIFGVFLLFLLVLTLSS). The Lumenal segment spans residues 35–384 (RKPSDSSSGL…HENFRAKQCK (350 aa)). Residues Asn156, Asn285, and Asn306 are each glycosylated (N-linked (GlcNAc...) asparagine).

Belongs to the glycosyltransferase 14 family.

Its subcellular location is the golgi apparatus membrane. Beta-glucuronosyltransferase involved in the biosynthesis of type II arabinogalactan (AG). Modifies both the beta-1,6-linked galactan and beta-1,3-linked galactan present in type II AG. The protein is Beta-glucuronosyltransferase GlcAT14C of Arabidopsis thaliana (Mouse-ear cress).